The sequence spans 441 residues: MMKNILLYKVLARYTSTKAARFVPKTGVYPKGYEVGGIHCGVKKDGKTFDLAILHNTHGKDASAAAVFTTNKFKAAPVQVSQKLIKETKGAGINSIVVNSGNANAVTGAQGMKDAEDMVIVTDSVLENKPNSTLVMSTGVIGNNLPIDNILSGIPKLALSHLGNSHQNWIDCATAICTTDTFPKLVSKQFTIGKDTYTLAGLCKGAGMICPNMATLLGFFVTDAPVSPSALQLILKYAVDRSFNSITVDGDMSTNDTIAAIANGAAGGELIDLNSSCAERYAELQKEITDFAQQLAQLVVRDGEGATKFITIKVKDALSYKDAKSIASSVANSSLFKTAMYGKDANWGRILCAIGYADVGNGSVVPQKTSVKFVPVDGSESLQLLQNGEPEKVDEERASEILADEDLVIEIDLGTGGGQGADFWTCDLSHEYVTINGDYRS.

6 residues coordinate substrate: threonine 178, lysine 204, threonine 215, glutamate 304, asparagine 436, and serine 441. Catalysis depends on threonine 215, which acts as the Nucleophile.

The protein belongs to the ArgJ family. As to quaternary structure, heterodimer of an alpha and a beta chain. Post-translationally, the alpha and beta chains are autoproteolytically processed from a single precursor protein within the mitochondrion.

It is found in the mitochondrion matrix. It carries out the reaction N(2)-acetyl-L-ornithine + L-glutamate = N-acetyl-L-glutamate + L-ornithine. It catalyses the reaction L-glutamate + acetyl-CoA = N-acetyl-L-glutamate + CoA + H(+). The protein operates within amino-acid biosynthesis; L-arginine biosynthesis; L-ornithine and N-acetyl-L-glutamate from L-glutamate and N(2)-acetyl-L-ornithine (cyclic): step 1/1. It functions in the pathway amino-acid biosynthesis; L-arginine biosynthesis; N(2)-acetyl-L-ornithine from L-glutamate: step 1/4. In terms of biological role, catalyzes two activities which are involved in the cyclic version of arginine biosynthesis: the synthesis of acetylglutamate from glutamate and acetyl-CoA, and of ornithine by transacetylation between acetylornithine and glutamate. This is Arginine biosynthesis bifunctional protein ArgJ, mitochondrial from Lodderomyces elongisporus (strain ATCC 11503 / CBS 2605 / JCM 1781 / NBRC 1676 / NRRL YB-4239) (Yeast).